The sequence spans 117 residues: Hainantoxin-XV-5 (117 aa).

Residues 1-20 form the signal peptide; the sequence is MKLCAVIIASLLVCVAVASS. A disordered region spans residues 20–55; it reads SSDNQKEFAQEKEMTREETQSLGEHEKDDEVTGSEE. The propeptide occupies 21 to 56; the sequence is SDNQKEFAQEKEMTREETQSLGEHEKDDEVTGSEER. Residues 23-55 show a composition bias toward basic and acidic residues; sequence NQKEFAQEKEMTREETQSLGEHEKDDEVTGSEE. Disulfide bonds link cysteine 58-cysteine 72, cysteine 65-cysteine 78, cysteine 69-cysteine 115, and cysteine 71-cysteine 91.

It belongs to the neurotoxin 03 (Tx2) family. 02 subfamily. HNTX-XV sub-subfamily. As to expression, expressed by the venom gland.

Its subcellular location is the secreted. Functionally, putative ion channel inhibitor. The chain is Hainantoxin-XV-5 from Cyriopagopus hainanus (Chinese bird spider).